A 192-amino-acid chain; its full sequence is Lipid A acyltransferase PagP (192 aa).

The signal sequence occupies residues 1-26; it reads MTVVNKSFLTILIFFCQILFPLNASA. Residues His-64, Asp-107, and Ser-108 contribute to the active site.

Belongs to the lipid A palmitoyltransferase family. Homodimer.

The protein resides in the cell outer membrane. It carries out the reaction a lipid A + a 1,2-diacyl-sn-glycero-3-phosphocholine = a hepta-acyl lipid A + a 2-acyl-sn-glycero-3-phosphocholine. It catalyses the reaction a lipid IVA + a 1,2-diacyl-sn-glycero-3-phosphocholine = a lipid IVB + a 2-acyl-sn-glycero-3-phosphocholine. The catalysed reaction is a lipid IIA + a 1,2-diacyl-sn-glycero-3-phosphocholine = a lipid IIB + a 2-acyl-sn-glycero-3-phosphocholine. Transfers a fatty acid residue from the sn-1 position of a phospholipid to the N-linked hydroxyfatty acid chain on the proximal unit of lipid A or its precursors. In Cronobacter sakazakii (strain ATCC BAA-894) (Enterobacter sakazakii), this protein is Lipid A acyltransferase PagP.